A 175-amino-acid polypeptide reads, in one-letter code: Regenerating islet-derived protein 3-beta (175 aa).

An N-terminal signal peptide occupies residues 1 to 26 (MLPPTACSVMSWMLLSCLMLLSQVQG). The propeptide occupies 27–37 (EDSLKNIPSAR). 3 disulfide bridges follow: C40/C51, C68/C171, and C146/C163. The C-type lectin domain occupies 47–172 (YGSYCYALFQ…CEVKLPYVCK (126 aa)). H107 contributes to the Zn(2+) binding site. The EPN motif lies at 114 to 116 (EPN). A Zn(2+)-binding site is contributed by E121.

In terms of assembly, forms a hexameric membrane-permeabilizing oligomeric pore on membrane phospholipids. The hexamer is formed by three dimers related by helical symmetry. Forms filaments, filamentation traps pore complexes and limits damage to host cells. Interacts with EXTL3. Post-translationally, proteolytic processing by trypsin removes an inhibitory N-terminal propeptide and is essential for peptidoglycan binding and antibacterial activity. Constitutively expressed in the small intestine, moderately in colon and at an extremely low level in healthy pancreas.

Its subcellular location is the secreted. Its activity is regulated as follows. Lipopolysaccharide inhibits pore-forming activity, explaining why is bactericidal for Gram-positive but not Gram-negative bacteria. In terms of biological role, bactericidal C-type lectin which acts against several intestinal Gram-positive and Gram-negative bacteria. Lacks antibacterial activity against S.typhimurium. May play a role in protection against infection with S.enteritidis by inhibiting its translocation from the gut lumen into intestinal tissues and further extraintestinal tissues. Functionally, acts as a hormone in response to different stimuli. Secreted by different cell types to activate its receptor EXTL3 and induce cell specific signaling pathways. In pancreas, is able stimulate cell proliferation. This chain is Regenerating islet-derived protein 3-beta, found in Mus musculus (Mouse).